Consider the following 120-residue polypeptide: Prefoldin subunit beta (120 aa).

This sequence belongs to the prefoldin subunit beta family. In terms of assembly, heterohexamer of two alpha and four beta subunits.

The protein resides in the cytoplasm. Its function is as follows. Molecular chaperone capable of stabilizing a range of proteins. Seems to fulfill an ATP-independent, HSP70-like function in archaeal de novo protein folding. This is Prefoldin subunit beta from Methanothrix thermoacetophila (strain DSM 6194 / JCM 14653 / NBRC 101360 / PT) (Methanosaeta thermophila).